Here is a 120-residue protein sequence, read N- to C-terminus: MALKIRLARGGSKKRPYYHVVIADARSPRDGRFLEKVGSWNPMLAKDDAKRVELDADRIKHWLDNGAQPTDRVLRFLDEAGVAKREVKSNPEKAKPGKRAQERAAEKAQKAADAAAATAE.

Residues 84-110 show a composition bias toward basic and acidic residues; that stretch reads KREVKSNPEKAKPGKRAQERAAEKAQK. A disordered region spans residues 84–120; it reads KREVKSNPEKAKPGKRAQERAAEKAQKAADAAAATAE. The span at 111-120 shows a compositional bias: low complexity; sequence AADAAAATAE.

This sequence belongs to the bacterial ribosomal protein bS16 family.

The protein is Small ribosomal subunit protein bS16 of Rhizobium rhizogenes (strain K84 / ATCC BAA-868) (Agrobacterium radiobacter).